We begin with the raw amino-acid sequence, 328 residues long: tRNA U34 carboxymethyltransferase (328 aa).

Carboxy-S-adenosyl-L-methionine-binding positions include Lys91, Trp105, Lys110, Gly130, 181–182, Met196, Tyr200, and Arg315; that span reads IE.

Belongs to the class I-like SAM-binding methyltransferase superfamily. CmoB family. Homotetramer.

It carries out the reaction carboxy-S-adenosyl-L-methionine + 5-hydroxyuridine(34) in tRNA = 5-carboxymethoxyuridine(34) in tRNA + S-adenosyl-L-homocysteine + H(+). In terms of biological role, catalyzes carboxymethyl transfer from carboxy-S-adenosyl-L-methionine (Cx-SAM) to 5-hydroxyuridine (ho5U) to form 5-carboxymethoxyuridine (cmo5U) at position 34 in tRNAs. This chain is tRNA U34 carboxymethyltransferase, found in Pectobacterium carotovorum subsp. carotovorum (strain PC1).